The chain runs to 75 residues: Large ribosomal subunit protein bL31 (75 aa).

It belongs to the bacterial ribosomal protein bL31 family. Type A subfamily. As to quaternary structure, part of the 50S ribosomal subunit.

In terms of biological role, binds the 23S rRNA. In Bradyrhizobium diazoefficiens (strain JCM 10833 / BCRC 13528 / IAM 13628 / NBRC 14792 / USDA 110), this protein is Large ribosomal subunit protein bL31.